We begin with the raw amino-acid sequence, 224 residues long: Urease accessory protein UreF (224 aa).

The protein belongs to the UreF family. As to quaternary structure, ureD, UreF and UreG form a complex that acts as a GTP-hydrolysis-dependent molecular chaperone, activating the urease apoprotein by helping to assemble the nickel containing metallocenter of UreC. The UreE protein probably delivers the nickel.

It localises to the cytoplasm. Functionally, required for maturation of urease via the functional incorporation of the urease nickel metallocenter. The chain is Urease accessory protein UreF from Pseudomonas fluorescens (strain Pf0-1).